The primary structure comprises 553 residues: Mucolipin-3 (553 aa).

Over 1–62 the chain is Cytoplasmic; the sequence is MANPEIVISS…FWARGRKPWK (62 aa). Residues 52-62 are interaction with phosphoinositides; that stretch reads KFWARGRKPWK. A helical membrane pass occupies residues 63–83; the sequence is LAIQILKIAMVTIQLVLFGLS. Residues 84–283 lie on the Extracellular side of the membrane; that stretch reads NQMVVAFKEE…VSGSIQKNTH (200 aa). The extracellular/lumenal pore loop stretch occupies residues 104–118; sequence KGYIDRMDDTYAVYT. N-linked (GlcNAc...) asparagine glycosylation is present at asparagine 138. Cysteines 159 and 185 form a disulfide. N-linked (GlcNAc...) asparagine glycosylation is present at asparagine 205. A disulfide bond links cysteine 238 and cysteine 269. A helical membrane pass occupies residues 284-304; it reads NMMIFDAFVILTCLVSLILCI. Over 305–341 the chain is Cytoplasmic; sequence RSVISGLQLQQEFVNFFLLHYKKDVSVSDQMEFVNGW. The helical transmembrane segment at 342 to 362 threads the bilayer; the sequence is YIMIIISDILTIIGSILKMEI. Over 363 to 371 the chain is Extracellular; sequence QAKSLTSYD. A helical transmembrane segment spans residues 372 to 392; sequence VCSILLGTSTMLVWLGVIRYL. Over 393–414 the chain is Cytoplasmic; that stretch reads GFFAKYNLLILTLQAALPNVIR. The chain crosses the membrane as a helical span at residues 415–435; sequence FCCCAAMIYLGYCFCGWIVLG. Over 436 to 443 the chain is Extracellular; it reads PYHNKFRS. The pore-forming intramembrane region spans 444–464; the sequence is LNMVSECLFSLINGDDMFATF. The Selectivity filter signature appears at 456-459; that stretch reads NGDD. The Extracellular portion of the chain corresponds to 465–475; that stretch reads AKMQQKSYLVW. Residues 476-497 form a helical membrane-spanning segment; sequence LFSRIYLYSFISLFIYMILSLF. Residues 498-553 lie on the Cytoplasmic side of the membrane; sequence IALITDTYETIKHYQQDGFPETELRTFISECKDLPNSGKFRLEDDPPVSLFCCCKK.

It belongs to the transient receptor (TC 1.A.4) family. Polycystin subfamily. MCOLN3 sub-subfamily. As to quaternary structure, homotetramer. Can heterooligomerize with MCOLN1; heteromeric assemblies have different channel properties as compared to the respective homooligomers and may be tissue-specific. May heterooligomerize with TRPV5 to form a functional distinct ion channel. Interacts with GABARAPL2. N-glycosylated.

It localises to the lysosome membrane. Its subcellular location is the early endosome membrane. It is found in the late endosome membrane. The protein localises to the cytoplasmic vesicle. The protein resides in the autophagosome membrane. It localises to the cell projection. Its subcellular location is the stereocilium membrane. It catalyses the reaction Ca(2+)(in) = Ca(2+)(out). It carries out the reaction Mg(2+)(in) = Mg(2+)(out). The catalysed reaction is K(+)(in) = K(+)(out). The enzyme catalyses Na(+)(in) = Na(+)(out). With respect to regulation, channel activity is activated by PtdIns(3,5)P2 (phosphatidylinositol 3,5-bisphosphate). Inhibited by lumenal H(+) and Na(+). The channel pore shows dynamic behavior and undergoes spontaneous, Ca(2+)-dependent modulation when conducting Ca(2+). Nonselective cation channel probably playing a role in the regulation of membrane trafficking events. Acts as a Ca(2+)-permeable cation channel with inwardly rectifying activity. Mediates release of Ca(2+) from endosomes to the cytoplasm, contributes to endosomal acidification and is involved in the regulation of membrane trafficking and fusion in the endosomal pathway. Also permeable to Mg(2+), Na(+) and K(+). Does not seem to act as mechanosensory transduction channel in inner ear sensory hair cells. Proposed to play a critical role at the cochlear stereocilia ankle-link region during hair-bundle growth. Involved in the regulation of autophagy. Through association with GABARAPL2 may be involved in autophagosome formation possibly providing Ca(2+) for the fusion process. Through a possible and probably tissue-specific heteromerization with MCOLN1 may be at least in part involved in many lysosome-dependent cellular events. Possible heteromeric ion channel assemblies with TRPV5 show pharmacological similarity with TRPML3. In Callithrix jacchus (White-tufted-ear marmoset), this protein is Mucolipin-3.